The primary structure comprises 248 residues: Gamma-interferon-inducible lysosomal thiol reductase (248 aa).

The first 26 residues, 1–26 (MSWSPILPFLSLLLLLFPLEVPRAAT), serve as a signal peptide directing secretion. The propeptide at 27–54 (ASLSQASSEGTTTCKAHDVCLLGPRPLP) is removed in mature form. C69 and C72 are joined by a disulfide. N-linked (GlcNAc...) asparagine glycosylation is found at N92 and N105. Residues 231 to 248 (KPDICSSIADSPRKVCYK) constitute a propeptide, removed in mature form.

This sequence belongs to the GILT family. In terms of assembly, dimer; disulfide-linked. N-glycosylated. Sugar chains contain mannose-6-phosphate. In terms of processing, synthesized as a 35 kDa precursor which is then processed into the mature 30 kDa form via cleavage of N-terminal and C-terminal propeptides. Processing of the precursor is mediated by multiple lysosomal proteases.

It is found in the secreted. The protein resides in the lysosome. Functionally, lysosomal thiol reductase that can reduce protein disulfide bonds. May facilitate the complete unfolding of proteins destined for lysosomal degradation. Plays an important role in antigen processing. Facilitates the generation of MHC class II-restricted epitodes from disulfide bond-containing antigen by the endocytic reduction of disulfide bonds. Also facilitates MHC class I-restricted recognition of exogenous antigens containing disulfide bonds by CD8+ T-cells or crosspresentation. This is Gamma-interferon-inducible lysosomal thiol reductase (Ifi30) from Mus musculus (Mouse).